Consider the following 259-residue polypeptide: Trans-aconitate 2-methyltransferase (259 aa).

The protein belongs to the methyltransferase superfamily. Tam family.

Its subcellular location is the cytoplasm. The catalysed reaction is trans-aconitate + S-adenosyl-L-methionine = (E)-3-(methoxycarbonyl)pent-2-enedioate + S-adenosyl-L-homocysteine. Catalyzes the S-adenosylmethionine monomethyl esterification of trans-aconitate. The protein is Trans-aconitate 2-methyltransferase of Variovorax paradoxus (strain S110).